Consider the following 261-residue polypeptide: Expansin-B2 (261 aa).

Residues 1–24 (MAGASAKVVAMLLSVLATYGFAAG) form the signal peptide. The region spanning 51–157 (GGACGFKNTN…RRVPCYHRGL (107 aa)) is the Expansin-like EG45 domain. Disulfide bonds link C54–C82, C85–C152, and C90–C96. Positions 170-256 (VYLAVLVEFA…NWRANTNYGS (87 aa)) constitute an Expansin-like CBD domain.

It belongs to the expansin family. Expansin B subfamily. In terms of tissue distribution, expressed in roots.

It localises to the secreted. It is found in the cell wall. The protein localises to the membrane. Its function is as follows. May cause loosening and extension of plant cell walls by disrupting non-covalent bonding between cellulose microfibrils and matrix glucans. No enzymatic activity has been found. May be required for rapid internodal elongation in deepwater rice during submergence. In Oryza sativa subsp. japonica (Rice), this protein is Expansin-B2 (EXPB2).